The primary structure comprises 150 residues: Large ribosomal subunit protein bL9 (150 aa).

This sequence belongs to the bacterial ribosomal protein bL9 family.

In terms of biological role, binds to the 23S rRNA. This chain is Large ribosomal subunit protein bL9, found in Pseudarthrobacter chlorophenolicus (strain ATCC 700700 / DSM 12829 / CIP 107037 / JCM 12360 / KCTC 9906 / NCIMB 13794 / A6) (Arthrobacter chlorophenolicus).